The sequence spans 62 residues: Photosystem II reaction center protein Z (62 aa).

2 consecutive transmembrane segments (helical) span residues 8–28 and 41–61; these read TLFALILFSFVLVVGVPVVFA and LSGLGLWILLVFVVGILNSFV.

The protein belongs to the PsbZ family. In terms of assembly, PSII is composed of 1 copy each of membrane proteins PsbA, PsbB, PsbC, PsbD, PsbE, PsbF, PsbH, PsbI, PsbJ, PsbK, PsbL, PsbM, PsbT, PsbY, PsbZ, Psb30/Ycf12, at least 3 peripheral proteins of the oxygen-evolving complex and a large number of cofactors. It forms dimeric complexes.

Its subcellular location is the plastid. It is found in the chloroplast thylakoid membrane. In terms of biological role, may control the interaction of photosystem II (PSII) cores with the light-harvesting antenna, regulates electron flow through the 2 photosystem reaction centers. PSII is a light-driven water plastoquinone oxidoreductase, using light energy to abstract electrons from H(2)O, generating a proton gradient subsequently used for ATP formation. The sequence is that of Photosystem II reaction center protein Z from Stigeoclonium helveticum (Green alga).